Consider the following 616-residue polypeptide: Replication protein A 70 kDa DNA-binding subunit (616 aa).

The residue at position 1 (Met1) is an N-acetylmethionine. Glycyl lysine isopeptide (Lys-Gly) (interchain with G-Cter in ubiquitin) cross-links involve residues Lys22 and Lys88. The segment at 121–154 (GLGQPQVAPPAPAASPAASSRPQPQNGSSGMGST) is disordered. The span at 134–145 (ASPAASSRPQPQ) shows a compositional bias: low complexity. Lys163 and Lys167 each carry N6-acetyllysine; alternate. Glycyl lysine isopeptide (Lys-Gly) (interchain with G-Cter in ubiquitin); alternate cross-links involve residues Lys163 and Lys167. The residue at position 180 (Thr180) is a Phosphothreonine. Lys183 participates in a covalent cross-link: Glycyl lysine isopeptide (Lys-Gly) (interchain with G-Cter in ubiquitin). Thr191 is modified (phosphothreonine). Residues 197 to 281 (WTICARVTNK…VKNDYEMTFN (85 aa)) constitute a DNA-binding region (OB). Residues Lys220 and Lys244 each participate in a glycyl lysine isopeptide (Lys-Gly) (interchain with G-Cter in ubiquitin) cross-link. Lys259 is subject to N6-acetyllysine; alternate. A Glycyl lysine isopeptide (Lys-Gly) (interchain with G-Cter in ubiquitin); alternate cross-link involves residue Lys259. Glycyl lysine isopeptide (Lys-Gly) (interchain with G-Cter in ubiquitin) cross-links involve residues Lys267 and Lys331. Position 384 is a phosphoserine (Ser384). Glycyl lysine isopeptide (Lys-Gly) (interchain with G-Cter in ubiquitin) cross-links involve residues Lys410 and Lys431. Residue Lys449 forms a Glycyl lysine isopeptide (Lys-Gly) (interchain with G-Cter in SUMO) linkage. Lys458 is covalently cross-linked (Glycyl lysine isopeptide (Lys-Gly) (interchain with G-Cter in ubiquitin)). The C4-type zinc finger occupies 481-503 (CPTQDCNKKVIDQQNGLYRCEKC). Lys553 participates in a covalent cross-link: Glycyl lysine isopeptide (Lys-Gly) (interchain with G-Cter in ubiquitin). Residue Lys577 forms a Glycyl lysine isopeptide (Lys-Gly) (interchain with G-Cter in SUMO) linkage.

It belongs to the replication factor A protein 1 family. In terms of assembly, component of the canonical replication protein A complex (RPA), a heterotrimer composed of RPA1, RPA2 and RPA3. Also a component of the aRPA, the alternative replication protein A complex, a trimeric complex similar to the replication protein A complex/RPA but where RPA1 and RPA3 are associated with RPA4 instead of RPA2. The DNA-binding activity may reside exclusively on the RPA1 subunit. Interacts with PRPF19; the PRP19-CDC5L complex is recruited to the sites of DNA repair where it ubiquitinates the replication protein A complex (RPA). Interacts with RIPK1. Interacts with the polymerase alpha subunit POLA1/p180; this interaction stabilizes the replicative complex and reduces the misincorporation rate of DNA polymerase alpha by acting as a fidelity clamp. Interacts with RAD51 and SENP6 to regulate DNA repair. Interacts with HELB; this interaction promotes HELB recruitment to chromatin following DNA damage. Interacts with PRIMPOL; leading to recruit PRIMPOL on chromatin and stimulate its DNA primase activity. Interacts with XPA; the interaction is direct and associates XPA with the RPA complex. Interacts with ETAA1; the interaction is direct and promotes ETAA1 recruitment at stalled replication forks. Interacts with RPA1; this interaction associates HROB with the RPA complex. Interacts (when poly-ADP-ribosylated) with HTATSF1. Interacts with BRIP1/FANCJ via this RPA1 subunit; following DNA damage they colocalize in foci in the nucleus. In terms of processing, DNA damage-induced 'Lys-63'-linked polyubiquitination by PRPF19 mediates ATRIP recruitment to the RPA complex at sites of DNA damage and activation of ATR. Ubiquitinated by RFWD3 at stalled replication forks in response to DNA damage: ubiquitination by RFWD3 does not lead to degradation by the proteasome and promotes removal of the RPA complex from stalled replication forks, promoting homologous recombination. Sumoylated on lysine residues Lys-449 and Lys-577, with Lys-449 being the major site. Sumoylation promotes recruitment of RAD51 to the DNA damage foci to initiate DNA repair through homologous recombination. Desumoylated by SENP6. Post-translationally, poly-ADP-ribosylated by PARP1; promoting recruitment of HTATSF1.

The protein localises to the nucleus. It localises to the PML body. As part of the heterotrimeric replication protein A complex (RPA/RP-A), binds and stabilizes single-stranded DNA intermediates that form during DNA replication or upon DNA stress. It prevents their reannealing and in parallel, recruits and activates different proteins and complexes involved in DNA metabolism. Thereby, it plays an essential role both in DNA replication and the cellular response to DNA damage. In the cellular response to DNA damage, the RPA complex controls DNA repair and DNA damage checkpoint activation. Through recruitment of ATRIP activates the ATR kinase a master regulator of the DNA damage response. It is required for the recruitment of the DNA double-strand break repair factors RAD51 and RAD52 to chromatin in response to DNA damage. Also recruits to sites of DNA damage proteins like XPA and XPG that are involved in nucleotide excision repair and is required for this mechanism of DNA repair. Also plays a role in base excision repair (BER) probably through interaction with UNG. Also recruits SMARCAL1/HARP, which is involved in replication fork restart, to sites of DNA damage. Plays a role in telomere maintenance. As part of the alternative replication protein A complex, aRPA, binds single-stranded DNA and probably plays a role in DNA repair. Compared to the RPA2-containing, canonical RPA complex, may not support chromosomal DNA replication and cell cycle progression through S-phase. The aRPA may not promote efficient priming by DNA polymerase alpha but could support DNA synthesis by polymerase delta in presence of PCNA and replication factor C (RFC), the dual incision/excision reaction of nucleotide excision repair and RAD51-dependent strand exchange. RPA stimulates 5'-3' helicase activity of the BRIP1/FANCJ. This is Replication protein A 70 kDa DNA-binding subunit (RPA1) from Homo sapiens (Human).